We begin with the raw amino-acid sequence, 455 residues long: Notoamide E oxidase notB' (455 aa).

A helical membrane pass occupies residues 11–31 (PAILSPADLTVIIVGLGIAGL). Glutamate 48 and glycine 61 together coordinate FAD. Residue asparagine 75 is glycosylated (N-linked (GlcNAc...) asparagine). Arginine 121 serves as a coordination point for FAD. Catalysis depends on residues arginine 199 and tyrosine 229. Residues aspartate 324 and glycine 337 each coordinate FAD.

This sequence belongs to the paxM FAD-dependent monooxygenase family. The cofactor is FAD.

It is found in the membrane. It carries out the reaction notoamide E + NADPH + O2 + H(+) = notoamide C + NADP(+) + H2O. The enzyme catalyses notoamide E + NADPH + O2 + H(+) = notoamide D + NADP(+) + H2O. It participates in alkaloid biosynthesis. FAD-dependent monooxygenase; part of the gene cluster that mediates the biosynthesis of notoamide, a fungal indole alkaloid that belongs to a family of natural products containing a characteristic bicyclo[2.2.2]diazaoctane core. The first step of notoamide biosynthesis involves coupling of L-proline and L-tryptophan by the bimodular NRPS notE', to produce cyclo-L-tryptophan-L-proline called brevianamide F. The reverse prenyltransferase notF' then acts as a deoxybrevianamide E synthase and converts brevianamide F to deoxybrevianamide E via reverse prenylation at C-2 of the indole ring leading to the bicyclo[2.2.2]diazaoctane core. Deoxybrevianamide E is further hydroxylated at C-6 of the indole ring, likely catalyzed by the cytochrome P450 monooxygenase notG', to yield 6-hydroxy-deoxybrevianamide E. 6-hydroxy-deoxybrevianamide E is a specific substrate of the prenyltransferase notC' for normal prenylation at C-7 to produce 6-hydroxy-7-prenyl-deoxybrevianamide, also called notoamide S. As the proposed pivotal branching point in notoamide biosynthesis, notoamide S can be diverted to notoamide E through an oxidative pyran ring closure putatively catalyzed by either notH' cytochrome P450 monooxygenase or the notD' FAD-linked oxidoreductase. This step would be followed by an indole 2,3-epoxidation-initiated pinacol-like rearrangement catalyzed by the notB' FAD-dependent monooxygenase leading to the formation of notoamide C and notoamide D. On the other hand notoamide S is converted to notoamide T by notH' (or notD'), a bifunctional oxidase that also functions as the intramolecular Diels-Alderase responsible for generation of (-)-notoamide T. To generate antipodal (+)-notoaminide T, notH (or notD) in Aspergillus strain MF297-2 is expected to catalyze a Diels-Alder reaction leading to the opposite stereochemistry. The remaining oxidoreductase notD' (or notH') likely catalyzes the oxidative pyran ring formation to yield (-)-stephacidin A. The FAD-dependent monooxygenase notI' is highly similar to notB' and is predicted to catalyze a similar conversion from (-)-stephacidin A to (+)-notoamide B via the 2,3-epoxidation of (-)-stephacidin A followed by a pinacol-type rearrangement. Finally, it remains unclear which enzyme could be responsible for the final hydroxylation steps leading to notoamide A and sclerotiamide. This Aspergillus versicolor protein is Notoamide E oxidase notB'.